Reading from the N-terminus, the 258-residue chain is Tritrans,polycis-undecaprenyl-diphosphate synthase (geranylgeranyl-diphosphate specific) (258 aa).

Residue aspartate 37 is part of the active site. Aspartate 37 provides a ligand contact to Mg(2+). Residues 38 to 41, histidine 54, and 82 to 84 contribute to the substrate site; these read GNRR and STE. Asparagine 85 serves as the catalytic Proton acceptor. Substrate-binding positions include phenylalanine 86, arginine 88, arginine 207, and 213–215; that span reads RIS. A Mg(2+)-binding site is contributed by glutamate 226.

It belongs to the UPP synthase family. As to quaternary structure, homodimer. It depends on Mg(2+) as a cofactor.

The catalysed reaction is geranylgeranyl diphosphate + 7 isopentenyl diphosphate = tri-trans,hepta-cis-undecaprenyl diphosphate + 7 diphosphate. Its function is as follows. Catalyzes the sequential condensation of isopentenyl diphosphate (IPP) with geranylgeranyl diphosphate (GGPP) to yield (2Z,6Z,10Z,14Z,18Z,22Z,26Z,30E,34E,38E)-undecaprenyl diphosphate (tritrans,heptacis-UPP). It is probably the precursor of glycosyl carrier lipids. The chain is Tritrans,polycis-undecaprenyl-diphosphate synthase (geranylgeranyl-diphosphate specific) from Thermoplasma acidophilum (strain ATCC 25905 / DSM 1728 / JCM 9062 / NBRC 15155 / AMRC-C165).